The sequence spans 65 residues: uncharacterized protein (65 aa).

This is an uncharacterized protein from Rickettsia conorii (strain ATCC VR-613 / Malish 7).